The following is a 406-amino-acid chain: Exodeoxyribonuclease 7 large subunit (406 aa).

The protein belongs to the XseA family. Heterooligomer composed of large and small subunits.

It is found in the cytoplasm. The catalysed reaction is Exonucleolytic cleavage in either 5'- to 3'- or 3'- to 5'-direction to yield nucleoside 5'-phosphates.. Bidirectionally degrades single-stranded DNA into large acid-insoluble oligonucleotides, which are then degraded further into small acid-soluble oligonucleotides. The protein is Exodeoxyribonuclease 7 large subunit of Desulfitobacterium hafniense (strain Y51).